Here is a 204-residue protein sequence, read N- to C-terminus: Thymidylate kinase (204 aa).

ATP is bound at residue 11-18; the sequence is GLDKSGKT.

Belongs to the thymidylate kinase family.

It carries out the reaction dTMP + ATP = dTDP + ADP. The protein operates within pyrimidine metabolism; dTTP biosynthesis. The sequence is that of Thymidylate kinase (TMK) from Rabbitpox virus (strain Utrecht) (RPV).